Here is a 605-residue protein sequence, read N- to C-terminus: Glutamine--fructose-6-phosphate aminotransferase [isomerizing] (605 aa).

C2 acts as the Nucleophile; for GATase activity in catalysis. Residues 2-219 (CGIVGVVGSK…DKELVVLTKD (218 aa)) enclose the Glutamine amidotransferase type-2 domain. SIS domains lie at 285 to 424 (IIKG…AEGE) and 457 to 595 (VADL…VDKP). The active-site For Fru-6P isomerization activity is the K600.

In terms of assembly, homodimer.

It is found in the cytoplasm. It catalyses the reaction D-fructose 6-phosphate + L-glutamine = D-glucosamine 6-phosphate + L-glutamate. Its function is as follows. Catalyzes the first step in hexosamine metabolism, converting fructose-6P into glucosamine-6P using glutamine as a nitrogen source. This is Glutamine--fructose-6-phosphate aminotransferase [isomerizing] from Lactococcus lactis subsp. lactis (strain IL1403) (Streptococcus lactis).